The chain runs to 270 residues: Chymotrypsin-like elastase family member 3A (270 aa).

The or 16 signal peptide spans 1–15 (MMLRLLSSLLLVAVA). The propeptide at 16–28 (SGYGPPSSHSSSR) is activation peptide. The Peptidase S1 domain maps to 29–268 (VVHGEDAVPY…FIDWIEETIA (240 aa)). A disulfide bridge connects residues cysteine 58 and cysteine 74. Histidine 73 acts as the Charge relay system in catalysis. N-linked (GlcNAc...) asparagine glycosylation occurs at asparagine 114. Cysteine 117 and cysteine 120 are disulfide-bonded. Aspartate 123 acts as the Charge relay system in catalysis. Cystine bridges form between cysteine 157-cysteine 223, cysteine 188-cysteine 204, and cysteine 213-cysteine 244. Serine 217 acts as the Charge relay system in catalysis.

Belongs to the peptidase S1 family. Elastase subfamily.

The catalysed reaction is Preferential cleavage: Ala-|-Xaa. Does not hydrolyze elastin.. Its function is as follows. Efficient protease with alanine specificity but only little elastolytic activity. This Homo sapiens (Human) protein is Chymotrypsin-like elastase family member 3A (CELA3A).